We begin with the raw amino-acid sequence, 185 residues long: Ribosome maturation factor RimM (185 aa).

The PRC barrel domain occupies 108–183 (PGEFHVTDLL…RLEIKTIPGL (76 aa)).

This sequence belongs to the RimM family. As to quaternary structure, binds ribosomal protein uS19.

The protein localises to the cytoplasm. Its function is as follows. An accessory protein needed during the final step in the assembly of 30S ribosomal subunit, possibly for assembly of the head region. Essential for efficient processing of 16S rRNA. May be needed both before and after RbfA during the maturation of 16S rRNA. It has affinity for free ribosomal 30S subunits but not for 70S ribosomes. The sequence is that of Ribosome maturation factor RimM from Synechocystis sp. (strain ATCC 27184 / PCC 6803 / Kazusa).